The sequence spans 166 residues: Large ribosomal subunit protein uL11x (166 aa).

The protein belongs to the universal ribosomal protein uL11 family.

Its function is as follows. Binds directly to 26S ribosomal RNA. This chain is Large ribosomal subunit protein uL11x (RPL12C), found in Arabidopsis thaliana (Mouse-ear cress).